Here is a 434-residue protein sequence, read N- to C-terminus: Protein maelstrom homolog (434 aa).

Positions 4-73 (RRASRNAYYF…AQGKDSGPSE (70 aa)) form a DNA-binding region, HMG box.

It belongs to the maelstrom family. In terms of assembly, interacts with SMARCB1, SIN3B and DDX4. Interacts with piRNA-associated proteins TDRD1, PIWIL1 and PIWIL2. Interacts with Tex19.1 and, probably, Tex19.2. In terms of tissue distribution, testis-specific. Present in spermatocytes and round and early elongating spermatids.

It is found in the cytoplasm. It localises to the nucleus. Functionally, plays a central role during spermatogenesis by repressing transposable elements and preventing their mobilization, which is essential for the germline integrity. Acts via the piRNA metabolic process, which mediates the repression of transposable elements during meiosis by forming complexes composed of piRNAs and Piwi proteins and governs the methylation and subsequent repression of transposons. Its association with piP-bodies suggests a participation in the secondary piRNAs metabolic process. Required for the localization of germ-cell factors to the meiotic nuage. In Mus musculus (Mouse), this protein is Protein maelstrom homolog.